The following is a 413-amino-acid chain: Gamma-glutamyl phosphate reductase (413 aa).

The protein belongs to the gamma-glutamyl phosphate reductase family.

The protein resides in the cytoplasm. The enzyme catalyses L-glutamate 5-semialdehyde + phosphate + NADP(+) = L-glutamyl 5-phosphate + NADPH + H(+). It functions in the pathway amino-acid biosynthesis; L-proline biosynthesis; L-glutamate 5-semialdehyde from L-glutamate: step 2/2. Catalyzes the NADPH-dependent reduction of L-glutamate 5-phosphate into L-glutamate 5-semialdehyde and phosphate. The product spontaneously undergoes cyclization to form 1-pyrroline-5-carboxylate. The protein is Gamma-glutamyl phosphate reductase of Salinispora tropica (strain ATCC BAA-916 / DSM 44818 / JCM 13857 / NBRC 105044 / CNB-440).